Reading from the N-terminus, the 1115-residue chain is Neural cell adhesion molecule 1 (1115 aa).

The signal sequence occupies residues 1–19; that stretch reads MLRTKDLIWTLFFLGTAVS. 5 consecutive Ig-like C2-type domains span residues 20-111, 116-205, 212-302, 309-402, and 407-492; these read LQVD…ATVN, QKLM…KDIQ, PTVQ…ASIH, PKIT…MYLE, and PKLQ…ESLE. The Extracellular segment spans residues 20–711; sequence LQVDIVPSQG…NGSPTAGLST (692 aa). Disulfide bonds link cysteine 41-cysteine 96 and cysteine 139-cysteine 189. Heparin-binding positions include 152-156 and 161-165; these read KHKGR and KKDVR. An N-linked (GlcNAc...) asparagine; partial glycan is attached at asparagine 222. A disulfide bond links cysteine 235 and cysteine 288. 5 N-linked (GlcNAc...) asparagine glycosylation sites follow: asparagine 316, asparagine 348, asparagine 424, asparagine 450, and asparagine 479. Cysteine 330 and cysteine 386 are disulfide-bonded. Cysteine 427 and cysteine 480 are oxidised to a cystine. 2 consecutive Fibronectin type-III domains span residues 500–599 and 601–696; these read TPSS…TQPV and EPSA…SAQP. The GPI-anchor amidated serine moiety is linked to residue threonine 706. The chain crosses the membrane as a helical span at residues 712–729; that stretch reads GAIVGILIVIFVLLLVVM. Topologically, residues 730 to 1115 are cytoplasmic; sequence DITCYFLNKC…TQTKENESKA (386 aa). Disordered stretches follow at residues 756-809, 839-912, and 924-1115; these read GAKG…TEPE, FATA…SASN, and VLSP…ESKA. Residues 758-799 show a composition bias toward basic and acidic residues; the sequence is KGKDMEEGKAAFSKDESKEPIVEVRTEEERTPNHDGGKHTEP. A phosphoserine mark is found at serine 770 and serine 774. 3 stretches are compositionally biased toward low complexity: residues 800–809, 845–856, and 876–896; these read NETTPLTEPE, SPTSETTTLTSS, and TPSKGVTASSSSPASAPKVAP. 2 positions are modified to phosphoserine: serine 887 and serine 890. Composition is skewed to polar residues over residues 902–912 and 926–935; these read DTPTSAPSASN and SPSTPASAGE. Serine 926 carries the phosphoserine modification. Phosphothreonine is present on threonine 929. Low complexity-rich tracts occupy residues 936–974 and 999–1012; these read TSKAPPASKASPAPTPTPAGAASPLAAVAAPATDAPQAK and AATAPASPKSKAAT. Phosphoserine is present on residues serine 946 and serine 958. A Phosphothreonine modification is found at threonine 1001. Serine 1005 is subject to Phosphoserine. 2 stretches are compositionally biased toward basic and acidic residues: residues 1019-1037 and 1074-1091; these read EDLKMDEGNFKTPDIDLAK and KTEKGPVETKSEPPESEA. A Phosphothreonine modification is found at threonine 1030.

As to quaternary structure, interacts with MDK. Found in a complex with SLC39A6, SLC39A10 and with NCAM1; this complex controls NCAM1 phosphorylation and integration into focal adhesion complexes during epithelial-tomesenchymal transition. Interacts with synaptic plasticity regulator PANTS. Polysialylated by ST8SIA2 and ST8SIA4. Polysialylation modulates cell interactions by confering both attractive and repulsive properties that are highly regulated by ST8SIA2 and ST8SIA4. Polysialylation is formed on a-2,3-linked sialic acid of core glycans.

It localises to the cell membrane. In terms of biological role, this protein is a cell adhesion molecule involved in neuron-neuron adhesion, neurite fasciculation, outgrowth of neurites, etc. The sequence is that of Neural cell adhesion molecule 1 from Mus musculus (Mouse).